Reading from the N-terminus, the 470-residue chain is MGKPWLRALQLLLLLGASWARAGAPRCTYTFVLPPQKFTGAVCWSGPASTRATPEAANASELAALRMRVGRHEELLRELQRLAAADGAVAGEVRALRKESRGLSARLGQLRAQLQHEAGPGAGPGADLGAEPAAALALLGERVLNASAEAQRAAARFHQLDVKFRELAQLVTQQSSLIARLERLCPGGAGGQQQVLPPPPLVPVVPVRLVGSTSDTSRMLDPAPEPQRDQTQRQQEPMASPMPAGHPAVPTKPVGPWQDCAEARQAGHEQSGVYELRVGRHVVSVWCEQQLEGGGWTVIQRRQDGSVNFFTTWQHYKAGFGRPDGEYWLGLEPVYQLTSRGDHELLVLLEDWGGRGARAHYDGFSLEPESDHYRLRLGQYHGDAGDSLSWHNDKPFSTVDRDRDSYSGNCALYQRGGWWYHACAHSNLNGVWHHGGHYRSRYQDGVYWAEFRGGAYSLRKAAMLIRPLKL.

Positions 1-20 are cleaved as a signal peptide; sequence MGKPWLRALQLLLLLGASWA. N-linked (GlcNAc...) asparagine glycosylation occurs at Asn58. Residues 59-116 adopt a coiled-coil conformation; that stretch reads ASELAALRMRVGRHEELLRELQRLAAADGAVAGEVRALRKESRGLSARLGQLRAQLQH. N-linked (GlcNAc...) (complex) asparagine glycosylation occurs at Asn145. The tract at residues 214–249 is disordered; that stretch reads SDTSRMLDPAPEPQRDQTQRQQEPMASPMPAGHPAV. The Fibrinogen C-terminal domain maps to 251–469; that stretch reads TKPVGPWQDC…KAAMLIRPLK (219 aa). Cystine bridges form between Cys260/Cys287 and Cys410/Cys423.

It is found in the secreted. In terms of biological role, may play a role in the wound healing process. May promote epidermal proliferation, remodeling and regeneration. May promote the chemotactic activity of endothelial cells and induce neovascularization. May counteract high-fat diet-induced obesity and related insulin resistance through increased energy expenditure. This Homo sapiens (Human) protein is Angiopoietin-related protein 6 (ANGPTL6).